Here is a 155-residue protein sequence, read N- to C-terminus: Ciliary microtubule inner protein 2C (155 aa).

It belongs to the CIMIP2 family.

It localises to the cytoplasm. The protein localises to the cytoskeleton. It is found in the cilium axoneme. Its function is as follows. Microtubule inner protein (MIP) part of the dynein-decorated doublet microtubules (DMTs) in cilia axoneme, which is required for motile cilia beating. This chain is Ciliary microtubule inner protein 2C (cimip2c), found in Xenopus tropicalis (Western clawed frog).